The following is a 118-amino-acid chain: UPF0145 protein PTO0347 (118 aa).

The protein belongs to the UPF0145 family.

The chain is UPF0145 protein PTO0347 from Picrophilus torridus (strain ATCC 700027 / DSM 9790 / JCM 10055 / NBRC 100828 / KAW 2/3).